A 224-amino-acid chain; its full sequence is Urease accessory protein UreF (224 aa).

Belongs to the UreF family. UreD, UreF and UreG form a complex that acts as a GTP-hydrolysis-dependent molecular chaperone, activating the urease apoprotein by helping to assemble the nickel containing metallocenter of UreC. The UreE protein probably delivers the nickel.

It is found in the cytoplasm. Functionally, required for maturation of urease via the functional incorporation of the urease nickel metallocenter. This chain is Urease accessory protein UreF, found in Klebsiella pneumoniae subsp. pneumoniae (strain ATCC 700721 / MGH 78578).